A 155-amino-acid chain; its full sequence is Protein LOL2 (155 aa).

Met-1 carries the N-acetylmethionine modification. Positions 1–35 (MEEIQQQTQKEEQKHREEEEEEEEGPPPGWESAVL) are disordered. Putative zinc finger stretches follow at residues 60 to 90 (QMVCGSCRRLLSYLRGSKHVKCSSCQTVNLV) and 98 to 128 (QVNCNNCKLLLMYPYGAPAVRCSSCNSVTDI). The disordered stretch occupies residues 130 to 155 (ENNKRPPWSEQQGPLKSLSSLRRAEN). Residues 138 to 149 (SEQQGPLKSLSS) are compositionally biased toward polar residues.

It localises to the nucleus. Functionally, putative zinc finger that may be involved in programmed cell death and defense response. The polypeptide is Protein LOL2 (LOL2) (Arabidopsis thaliana (Mouse-ear cress)).